Here is a 913-residue protein sequence, read N- to C-terminus: Protein SEY1 homolog (913 aa).

The Cytoplasmic portion of the chain corresponds to 1–825; the sequence is MANASKTQII…ETGGQMSLKN (825 aa). The GB1/RHD3-type G domain maps to 33–288; the sequence is GFNYNVIAIL…IPADGFAQYC (256 aa). 43-50 serves as a coordination point for GTP; sequence GSQSSGKS. Disordered stretches follow at residues 89-108 and 436-455; these read AGGS…GDKP and TEQD…AKKG. 2 coiled-coil regions span residues 636–659 and 703–727; these read DDEN…MESL and IEII…VIIN. A helical membrane pass occupies residues 826-846; that stretch reads VPFAFWVILLILGWNEILMFT. Topologically, residues 847 to 849 are lumenal; that stretch reads RLF. Residues 850 to 870 form a helical membrane-spanning segment; that stretch reads FRLNIILPMFMAFIIIVGSCL. At 871-913 the chain is on the cytoplasmic side; the sequence is YTGNAQVLSYLNKIAFIVIKHSYNFYKHLQTVGNQPTKPEKVD.

Belongs to the TRAFAC class dynamin-like GTPase superfamily. GB1/RHD3 GTPase family. RHD3 subfamily.

It is found in the endoplasmic reticulum membrane. Its function is as follows. Probable GTP-binding protein involved in generating and maintaining the structure of the tubular endoplasmic reticulum network. This Plasmodium chabaudi chabaudi protein is Protein SEY1 homolog.